The primary structure comprises 88 residues: Small ribosomal subunit protein uS15 (88 aa).

This sequence belongs to the universal ribosomal protein uS15 family. Part of the 30S ribosomal subunit. Forms a bridge to the 50S subunit in the 70S ribosome, contacting the 23S rRNA.

In terms of biological role, one of the primary rRNA binding proteins, it binds directly to 16S rRNA where it helps nucleate assembly of the platform of the 30S subunit by binding and bridging several RNA helices of the 16S rRNA. Functionally, forms an intersubunit bridge (bridge B4) with the 23S rRNA of the 50S subunit in the ribosome. The sequence is that of Small ribosomal subunit protein uS15 from Psychrobacter arcticus (strain DSM 17307 / VKM B-2377 / 273-4).